The chain runs to 935 residues: Disintegrin and metalloproteinase domain-containing protein 22 (935 aa).

The N-terminal stretch at 1-24 is a signal peptide; that stretch reads MHINGGPLASWICCVIGSIHLAHA. Positions 25-227 are excised as a propeptide; sequence STRPENGGTS…QQTRSQRKKR (203 aa). N-linked (GlcNAc...) asparagine glycans are attached at residues asparagine 167 and asparagine 210. The Extracellular segment spans residues 228–736; that stretch reads QTRRYPRNVE…NRDEGVISTN (509 aa). A Peptidase M12B domain is found at 241-440; that stretch reads KYVELMIVND…GGGACLFNKP (200 aa). 17 disulfide bridges follow: cysteine 351–cysteine 435, cysteine 394–cysteine 419, cysteine 396–cysteine 403, cysteine 449–cysteine 479, cysteine 460–cysteine 476, cysteine 462–cysteine 468, cysteine 475–cysteine 496, cysteine 487–cysteine 493, cysteine 492–cysteine 518, cysteine 505–cysteine 525, cysteine 512–cysteine 544, cysteine 537–cysteine 549, cysteine 556–cysteine 607, cysteine 571–cysteine 637, cysteine 585–cysteine 595, cysteine 602–cysteine 665, and cysteine 659–cysteine 670. Residues 446–533 enclose the Disintegrin domain; the sequence is PPECGNGFVE…QCPANIHKLD (88 aa). The N-linked (GlcNAc...) asparagine glycan is linked to asparagine 521. N-linked (GlcNAc...) asparagine glycans are attached at residues asparagine 609 and asparagine 636. An N-linked (GlcNAc...) asparagine glycan is attached at asparagine 677. The 37-residue stretch at 677–713 folds into the EGF-like domain; it reads NFSTCLGSTNKICSGHGVCSNEVRCICDRFWTGEDCS. Intrachain disulfides connect cysteine 681/cysteine 695, cysteine 689/cysteine 701, and cysteine 703/cysteine 712. The chain crosses the membrane as a helical span at residues 737 to 757; that stretch reads IIIGAIAGTILVLALVLGITA. At 758–935 the chain is on the cytoplasmic side; that stretch reads WGYKNYRRER…QSARLWETSI (178 aa). The disordered stretch occupies residues 850-935; that stretch reads VSDVCENGRP…QSARLWETSI (86 aa). Positions 859 to 870 are enriched in polar residues; it reads PRSNSWQGNVTS. The segment covering 871-882 has biased composition (basic residues); that stretch reads SRKKLRGKRFRP. The span at 891-906 shows a compositional bias: low complexity; that stretch reads SPAKSPSSSTGSIASS.

In terms of processing, the precursor is cleaved by a furin endopeptidase. In terms of tissue distribution, low levels in adult tissues. Not detected in developing embryos.

Its subcellular location is the cell membrane. Probable ligand for integrin in the brain. This is a non catalytic metalloprotease-like protein. The polypeptide is Disintegrin and metalloproteinase domain-containing protein 22 (adam22) (Xenopus laevis (African clawed frog)).